The chain runs to 556 residues: Urocanate hydratase (556 aa).

NAD(+)-binding positions include 52-53 (GG), glutamine 130, 176-178 (GMG), glutamate 196, arginine 201, 242-243 (NA), 263-267 (QTSAH), 273-274 (YL), and tyrosine 322. Cysteine 410 is a catalytic residue. Glycine 492 contacts NAD(+).

The protein belongs to the urocanase family. The cofactor is NAD(+).

Its subcellular location is the cytoplasm. It catalyses the reaction 4-imidazolone-5-propanoate = trans-urocanate + H2O. It functions in the pathway amino-acid degradation; L-histidine degradation into L-glutamate; N-formimidoyl-L-glutamate from L-histidine: step 2/3. Its function is as follows. Catalyzes the conversion of urocanate to 4-imidazolone-5-propionate. This Bradyrhizobium sp. (strain BTAi1 / ATCC BAA-1182) protein is Urocanate hydratase.